The primary structure comprises 297 residues: tRNA dimethylallyltransferase (297 aa).

10–17 (GITASGKS) serves as a coordination point for ATP. 12-17 (TASGKS) is a binding site for substrate. The segment at 36-39 (DSKQ) is interaction with substrate tRNA.

The protein belongs to the IPP transferase family. In terms of assembly, monomer. Mg(2+) is required as a cofactor.

The catalysed reaction is adenosine(37) in tRNA + dimethylallyl diphosphate = N(6)-dimethylallyladenosine(37) in tRNA + diphosphate. Catalyzes the transfer of a dimethylallyl group onto the adenine at position 37 in tRNAs that read codons beginning with uridine, leading to the formation of N6-(dimethylallyl)adenosine (i(6)A). The sequence is that of tRNA dimethylallyltransferase from Wolbachia pipientis subsp. Culex pipiens (strain wPip).